The following is a 183-amino-acid chain: Adenine phosphoribosyltransferase (183 aa).

This sequence belongs to the purine/pyrimidine phosphoribosyltransferase family. Homodimer.

It is found in the cytoplasm. The enzyme catalyses AMP + diphosphate = 5-phospho-alpha-D-ribose 1-diphosphate + adenine. Its pathway is purine metabolism; AMP biosynthesis via salvage pathway; AMP from adenine: step 1/1. Functionally, catalyzes a salvage reaction resulting in the formation of AMP, that is energically less costly than de novo synthesis. The polypeptide is Adenine phosphoribosyltransferase (Proteus mirabilis (strain HI4320)).